An 857-amino-acid chain; its full sequence is Facilitated trehalose transporter Tret1-1 (857 aa).

Disordered regions lie at residues 1–28 (MSGR…KLKE) and 62–203 (DPFL…KATS). Topologically, residues 1-392 (MSGRDSRGAG…VYRPTTNPIY (392 aa)) are cytoplasmic. The segment covering 69–81 (VSPQRHPQNTVRT) has biased composition (polar residues). The segment covering 134-143 (EIREHRDRQQ) has biased composition (basic and acidic residues). The segment covering 171–181 (GNSNTNSNKAA) has biased composition (polar residues). Residues serine 248, serine 249, serine 250, serine 320, and serine 322 each carry the phosphoserine modification. The disordered stretch occupies residues 327 to 346 (LTSRQHFQQQRSISTDSRKS). Residues 330–341 (RQHFQQQRSIST) show a composition bias toward polar residues. Residues 393–413 (IWTQVLAALSVSLGSLVVGFV) form a helical membrane-spanning segment. Topologically, residues 414 to 440 (SAYTSPALVSMTDRNITSFEVTQDAGS) are extracellular. Asparagine 428 carries an N-linked (GlcNAc...) asparagine glycan. Residues 441-461 (WVGGIMPLAGLAGGIAGGPLI) traverse the membrane as a helical segment. Topologically, residues 462–473 (EYLGRRNTILAT) are cytoplasmic. Residues 474-494 (AVPFIVSSLLIACAVNVAMVL) form a helical membrane-spanning segment. Topologically, residues 495 to 497 (CGR) are extracellular. Residues 498-518 (FLAGFCVGIASLSLPVYLGET) form a helical membrane-spanning segment. The Cytoplasmic portion of the chain corresponds to 519–528 (VQPEVRGTLG). The helical transmembrane segment at 529–549 (LLPTAFGNIGILLCFVAGSFM) threads the bilayer. An N-linked (GlcNAc...) asparagine glycan is attached at asparagine 550. The Extracellular segment spans residues 550 to 552 (NWS). The helical transmembrane segment at 553–573 (MLAFLGAALPVPFLILMFLIP) threads the bilayer. Residues 574-636 (ETPRWFVGRG…ELFKRINLKP (63 aa)) are Cytoplasmic-facing. Residues 637-657 (LSISLGLMFFQQFSGINAVIF) traverse the membrane as a helical segment. The Extracellular segment spans residues 658–673 (YTVQIFKDAGSTIDSN). Residues 674 to 694 (LCTIIVGIVNFFATFMGILLI) form a helical membrane-spanning segment. Residues 695–700 (DRLGRK) lie on the Cytoplasmic side of the membrane. A helical transmembrane segment spans residues 701–721 (ILLYISDIAMILTLSILGGFF). The Extracellular segment spans residues 722-740 (YCKAHGPDVSHLGWLPLTC). A helical transmembrane segment spans residues 741-761 (FVIYILGFSLGFGPIPWLMMG). Residues 762-770 (EILPAKIRG) are Cytoplasmic-facing. The chain crosses the membrane as a helical span at residues 771-791 (PAASVVTAFNWFCTFVVTKTF). At 792-801 (QDLTGAMGAH) the chain is on the extracellular side. The chain crosses the membrane as a helical span at residues 802–822 (GAFWLFGAICFVGLFFVIIYV). Over 823 to 857 (PETQGKTLEDIERKMMGRVRRMSSVANIKPLSFNM) the chain is Cytoplasmic. Residues serine 845 and serine 846 each carry the phosphoserine modification.

This sequence belongs to the major facilitator superfamily. Sugar transporter (TC 2.A.1.1) family. Trehalose transporter subfamily.

Its subcellular location is the cell membrane. Its function is as follows. Low-capacity facilitative transporter for trehalose. Does not transport maltose, sucrose or lactose. Mediates the bidirectional transfer of trehalose. Responsible for the transport of trehalose synthesized in the fat body and the incorporation of trehalose into other tissues that require a carbon source, thereby regulating trehalose levels in the hemolymph. The sequence is that of Facilitated trehalose transporter Tret1-1 from Drosophila simulans (Fruit fly).